Reading from the N-terminus, the 252-residue chain is Chaperone protein AggD (252 aa).

A signal peptide spans M1–A22.

It belongs to the periplasmic pilus chaperone family.

The protein resides in the periplasm. Its function is as follows. Involved in the biogenesis of the AAF/I fimbriae. The protein is Chaperone protein AggD (aggD) of Escherichia coli.